The sequence spans 214 residues: MADS-box protein CMB2 (214 aa).

An MADS-box domain is found at 3–58 (RGKLEIRKIENKTNRQVTFSKRRNGIMKKAQELTVLCDAKVSLLMISSTHKLHHYL). In terms of domain architecture, K-box spans 84-174 (WERMQEQHRK…VMELEAKFRG (91 aa)).

In flowers. Not found in vegetative tissues.

It localises to the nucleus. This is MADS-box protein CMB2 (CMB2) from Dianthus caryophyllus (Carnation).